The following is a 2300-amino-acid chain: Adenylate cyclase (2300 aa).

Polar residues-rich tracts occupy residues 1–21 (MTRN…SSIT) and 28–41 (TPTS…TRPL). Disordered regions lie at residues 1-256 (MTRN…GSFL), 272-593 (GIRP…DLTR), and 631-652 (TKLF…MDED). Low complexity-rich tracts occupy residues 42 to 61 (SPSL…VSRS) and 92 to 152 (SSQS…QVSP). The segment covering 153 to 169 (TGGSRLTQSPTTPSNAS) has biased composition (polar residues). Residues 170–185 (IREHRMSELGGYRREM) show a composition bias toward basic and acidic residues. Residues 204-221 (QQQPQQPQQQQQQQQQQQ) are compositionally biased toward low complexity. Residues 228 to 237 (VSGTFSNLSQ) are compositionally biased toward polar residues. A compositionally biased stretch (low complexity) spans 303 to 313 (SIASITTTASS). The span at 333–344 (GDRDDWPGRDSS) shows a compositional bias: basic and acidic residues. The span at 345–357 (EISLPQPSHSGPM) shows a compositional bias: polar residues. Pro residues predominate over residues 410 to 421 (PSRPRTPVPAPE). Residues 455–469 (DSSQNPPKTSSSARS) show a composition bias toward polar residues. The segment covering 484–501 (KSNEDPRALKPSLSREDS) has biased composition (basic and acidic residues). Positions 511–550 (NGSSSMMGTRSRAQSPAPSWTGTSRGLKANSISDGTSSPA) are enriched in polar residues. Residues 552–565 (SHKKGILGRFRRHN) show a composition bias toward basic residues. The span at 631–643 (TKLFTSKKSSSAK) shows a compositional bias: low complexity. The Ras-associating domain maps to 749–841 (SNYYIRVFRS…IDEIGREDNS (93 aa)). LRR repeat units lie at residues 867-890 (NQKL…LYRK), 892-914 (AEIV…FIQA), 915-938 (CTAL…FATA), 939-961 (SKLT…ELSK), 962-986 (LTGL…GAYK), 988-1008 (LRTL…ICEL), 1009-1031 (ETIV…LMKL), 1033-1055 (NLEK…VRDL), 1056-1079 (VSLR…DLPR), 1081-1097 (EILS…SGSF), 1098-1119 (ERLR…KAPV), 1120-1142 (PTLK…IDNL), 1143-1165 (MNLE…IGNL), 1166-1188 (KKLD…IGCL), 1189-1211 (TELR…IWWA), and 1213-1234 (KLEH…ASRA). Positions 1228–1336 (PKPASRAPQA…VITPSNGPRK (109 aa)) are disordered. Over residues 1253–1263 (ANKNGLLSRTP) the composition is skewed to polar residues. Residues 1313–1327 (TSVVSRSTTQSSTGV) show a composition bias toward low complexity. LRR repeat units follow at residues 1349-1369 (SGSL…VFEE), 1373-1396 (LPEL…TIRS), 1398-1420 (PQLV…DFLE), 1422-1445 (HCLL…ISRA), 1447-1469 (KLQV…PYDW), and 1474-1497 (NRDL…YRQP). Residues 1552–1828 (PYGMADTLGK…NKLLIMMIGV (277 aa)) form the PPM-type phosphatase domain. The interval 1847–1867 (FSMPQDDPSHVPPSGNKRRKV) is disordered. One can recognise a Guanylate cyclase domain in the interval 1892-2029 (SIVFTDIKNS…PMVNKASRIS (138 aa)). Residues aspartate 1897 and aspartate 1940 each coordinate Mg(2+). Positions 2272-2300 (LDQAETDDATDNNSSGDVDTLDGSDTEQE) are disordered. The span at 2290-2300 (DTLDGSDTEQE) shows a compositional bias: acidic residues.

This sequence belongs to the adenylyl cyclase class-4/guanylyl cyclase family. Mg(2+) is required as a cofactor.

The enzyme catalyses ATP = 3',5'-cyclic AMP + diphosphate. Plays essential roles in regulation of cellular metabolism by catalyzing the synthesis of a second messenger, cAMP. In Neurospora crassa (strain ATCC 24698 / 74-OR23-1A / CBS 708.71 / DSM 1257 / FGSC 987), this protein is Adenylate cyclase (cr-1).